Consider the following 285-residue polypeptide: HTH-type transcriptional regulator MurR (285 aa).

Residues Met-1–Ser-77 enclose the HTH rpiR-type domain. Positions Ser-37 to Gln-56 form a DNA-binding region, H-T-H motif. The SIS domain maps to Ile-128–Glu-279.

In terms of assembly, homotetramer.

It participates in amino-sugar metabolism; N-acetylmuramate degradation [regulation]. Represses the expression of the murPQ operon involved in the uptake and degradation of N-acetylmuramic acid (MurNAc). Binds to two adjacent inverted repeats within the operator region. MurNAc 6-phosphate, the substrate of MurQ, is the specific inducer that weakens binding of MurR to the operator. The chain is HTH-type transcriptional regulator MurR from Shigella boydii serotype 18 (strain CDC 3083-94 / BS512).